The following is a 480-amino-acid chain: Siroheme synthase 1 (480 aa).

A precorrin-2 dehydrogenase /sirohydrochlorin ferrochelatase region spans residues 1–203 (MNYLPIFADL…GQLEQAEGEL (203 aa)). Residues 22 to 23 (EV) and 43 to 44 (LA) each bind NAD(+). Ser-128 is subject to Phosphoserine. The interval 222-480 (GEVALVGAGP…DSRPAVVNLA (259 aa)) is uroporphyrinogen-III C-methyltransferase. Pro-231 provides a ligand contact to S-adenosyl-L-methionine. Asp-254 acts as the Proton acceptor in catalysis. Catalysis depends on Lys-276, which acts as the Proton donor. S-adenosyl-L-methionine contacts are provided by residues 307-309 (GGD), Ile-312, 337-338 (TA), Met-389, and Gly-418.

In the N-terminal section; belongs to the precorrin-2 dehydrogenase / sirohydrochlorin ferrochelatase family. It in the C-terminal section; belongs to the precorrin methyltransferase family.

It carries out the reaction uroporphyrinogen III + 2 S-adenosyl-L-methionine = precorrin-2 + 2 S-adenosyl-L-homocysteine + H(+). The enzyme catalyses precorrin-2 + NAD(+) = sirohydrochlorin + NADH + 2 H(+). It catalyses the reaction siroheme + 2 H(+) = sirohydrochlorin + Fe(2+). The protein operates within cofactor biosynthesis; adenosylcobalamin biosynthesis; precorrin-2 from uroporphyrinogen III: step 1/1. It participates in cofactor biosynthesis; adenosylcobalamin biosynthesis; sirohydrochlorin from precorrin-2: step 1/1. It functions in the pathway porphyrin-containing compound metabolism; siroheme biosynthesis; precorrin-2 from uroporphyrinogen III: step 1/1. Its pathway is porphyrin-containing compound metabolism; siroheme biosynthesis; siroheme from sirohydrochlorin: step 1/1. The protein operates within porphyrin-containing compound metabolism; siroheme biosynthesis; sirohydrochlorin from precorrin-2: step 1/1. Multifunctional enzyme that catalyzes the SAM-dependent methylations of uroporphyrinogen III at position C-2 and C-7 to form precorrin-2 via precorrin-1. Then it catalyzes the NAD-dependent ring dehydrogenation of precorrin-2 to yield sirohydrochlorin. Finally, it catalyzes the ferrochelation of sirohydrochlorin to yield siroheme. The protein is Siroheme synthase 1 of Pectobacterium atrosepticum (strain SCRI 1043 / ATCC BAA-672) (Erwinia carotovora subsp. atroseptica).